We begin with the raw amino-acid sequence, 84 residues long: MDNNVDTITLTDEEGKETEFEVITKLDIEDKEYVVVVPKNEEVDEAIALRIDNNDNGEEVLVPVEEDEEFNMVAEAYELLFSEE.

The protein belongs to the UPF0473 family.

This Clostridium botulinum (strain Langeland / NCTC 10281 / Type F) protein is UPF0473 protein CLI_2624.